Consider the following 57-residue polypeptide: uncharacterized protein (57 aa).

Transmembrane regions (helical) follow at residues 2–22 and 29–49; these read LLVV…LRSV and GFLL…MTVI.

The protein localises to the cell membrane. This is an uncharacterized protein from Bacillus subtilis (strain 168).